A 486-amino-acid chain; its full sequence is Replication factor C large subunit (486 aa).

46 to 53 (GPPGSGKT) provides a ligand contact to ATP. The disordered stretch occupies residues 419–486 (VKKETPKKTE…KKQATLDSFF (68 aa)). Composition is skewed to basic and acidic residues over residues 420–432 (KKET…KPKE) and 442–480 (RISE…KKQA).

This sequence belongs to the activator 1 small subunits family. RfcL subfamily. Heteromultimer composed of small subunits (RfcS) and large subunits (RfcL).

Its function is as follows. Part of the RFC clamp loader complex which loads the PCNA sliding clamp onto DNA. The protein is Replication factor C large subunit of Methanococcus maripaludis (strain DSM 14266 / JCM 13030 / NBRC 101832 / S2 / LL).